The primary structure comprises 453 residues: Probable 1,4-beta-D-glucan cellobiohydrolase A (453 aa).

A signal peptide spans 1–17; it reads MYQRALLFSALATAVSA. The active-site Nucleophile is the Glu-226. Glu-231 (proton donor) is an active-site residue. The N-linked (GlcNAc...) asparagine glycan is linked to Asn-284.

The protein belongs to the glycosyl hydrolase 7 (cellulase C) family.

Its subcellular location is the secreted. The enzyme catalyses Hydrolysis of (1-&gt;4)-beta-D-glucosidic linkages in cellulose and cellotetraose, releasing cellobiose from the non-reducing ends of the chains.. Functionally, the biological conversion of cellulose to glucose generally requires three types of hydrolytic enzymes: (1) Endoglucanases which cut internal beta-1,4-glucosidic bonds; (2) Exocellobiohydrolases that cut the disaccharide cellobiose from the non-reducing end of the cellulose polymer chain; (3) Beta-1,4-glucosidases which hydrolyze the cellobiose and other short cello-oligosaccharides to glucose. The chain is Probable 1,4-beta-D-glucan cellobiohydrolase A (cbhA) from Aspergillus clavatus (strain ATCC 1007 / CBS 513.65 / DSM 816 / NCTC 3887 / NRRL 1 / QM 1276 / 107).